A 301-amino-acid chain; its full sequence is Acetylglutamate kinase (301 aa).

Substrate contacts are provided by residues Gly-68–Gly-69, Arg-90, and Asn-197.

Belongs to the acetylglutamate kinase family. ArgB subfamily.

Its subcellular location is the cytoplasm. The catalysed reaction is N-acetyl-L-glutamate + ATP = N-acetyl-L-glutamyl 5-phosphate + ADP. The protein operates within amino-acid biosynthesis; L-arginine biosynthesis; N(2)-acetyl-L-ornithine from L-glutamate: step 2/4. Functionally, catalyzes the ATP-dependent phosphorylation of N-acetyl-L-glutamate. The sequence is that of Acetylglutamate kinase from Nitrosococcus oceani (strain ATCC 19707 / BCRC 17464 / JCM 30415 / NCIMB 11848 / C-107).